We begin with the raw amino-acid sequence, 209 residues long: Na(+)-translocating NADH-quinone reductase subunit D (209 aa).

Helical transmembrane passes span 42–62 (VVMT…ISLI), 66–86 (IPNS…VIVV), 95–115 (FEIS…CIVM), 131–151 (FMDG…VGFL), and 178–198 (NGLF…IWAL).

It belongs to the NqrDE/RnfAE family. In terms of assembly, composed of six subunits; NqrA, NqrB, NqrC, NqrD, NqrE and NqrF.

It is found in the cell inner membrane. It catalyses the reaction a ubiquinone + n Na(+)(in) + NADH + H(+) = a ubiquinol + n Na(+)(out) + NAD(+). Its function is as follows. NQR complex catalyzes the reduction of ubiquinone-1 to ubiquinol by two successive reactions, coupled with the transport of Na(+) ions from the cytoplasm to the periplasm. NqrA to NqrE are probably involved in the second step, the conversion of ubisemiquinone to ubiquinol. This is Na(+)-translocating NADH-quinone reductase subunit D from Serratia proteamaculans (strain 568).